A 585-amino-acid chain; its full sequence is Testis-specific serine kinase substrate (585 aa).

Low complexity predominate over residues 91–108 (EPDSSGTDSTTEDSGPLA). Residues 91–125 (EPDSSGTDSTTEDSGPLALPGPPASPTTPWAPEDP) form a disordered region. Ser-224 is subject to Phosphoserine. 2 disordered regions span residues 264-312 (HGLS…SEQE) and 559-585 (LEGS…GSEQ). The residue at position 281 (Ser-281) is a Phosphoserine; by TSSK1 and TSSK2. Ser-309 carries the post-translational modification Phosphoserine.

In terms of processing, phosphorylated on serine residue(s) by STK22A/TSSK1 and STK22B/TSSK2. Testis specific.

The protein resides in the cytoplasm. It is found in the cytoskeleton. It localises to the microtubule organizing center. Its subcellular location is the centrosome. The protein localises to the centriole. The protein resides in the cytoplasmic vesicle. It is found in the secretory vesicle. It localises to the acrosome. May play a role in testicular physiology, most probably in the process of spermatogenesis or spermatid development. This chain is Testis-specific serine kinase substrate (Tsks), found in Mus musculus (Mouse).